The following is a 497-amino-acid chain: Long chain base biosynthesis protein 2c (497 aa).

A helical transmembrane segment spans residues 4–24; it reads VPFVTAVTTVFSYGVIFGFGH. Position 319 is an N6-(pyridoxal phosphate)lysine (Lys319).

This sequence belongs to the class-II pyridoxal-phosphate-dependent aminotransferase family. Heterodimer with LCB1. Component of the serine palmitoyltransferase (SPT) complex, composed of LCB1 and LCB2. Pyridoxal 5'-phosphate serves as cofactor.

It localises to the endoplasmic reticulum membrane. It catalyses the reaction L-serine + hexadecanoyl-CoA + H(+) = 3-oxosphinganine + CO2 + CoA. The protein operates within lipid metabolism; sphingolipid metabolism. In terms of biological role, serine palmitoyltransferase (SPT). The heterodimer formed with LCB1 constitutes the catalytic core. In Oryza sativa subsp. japonica (Rice), this protein is Long chain base biosynthesis protein 2c.